The primary structure comprises 211 residues: Methylamine utilization protein MauD (211 aa).

A helical transmembrane segment spans residues 5–25; that stretch reads ILIASNVLLWGAFLALAALML. In terms of domain architecture, Thioredoxin spans 50–187; the sequence is PDVGERSPIF…LFETIREGHS (138 aa).

The protein localises to the membrane. Its pathway is one-carbon metabolism; methylamine degradation. Its function is as follows. May be specifically involved in the processing, transport, and/or maturation of the MADH beta-subunit. In Methylophilus methylotrophus (Bacterium W3A1), this protein is Methylamine utilization protein MauD (mauD).